A 1163-amino-acid chain; its full sequence is Genome polyprotein (1163 aa).

The Cytoplasmic segment spans residues 1-104 (MSGRKAQGKT…LSSRKRRSYE (104 aa)). The tract at residues 38–72 (PGPSRGVQGFIFFFLFNVLTGRKITAHLKKLWRML) is hydrophobic; homodimerization of capsid protein C. Residues 102-121 (SYEVLTVQFLILGMLLMTGG) constitute a propeptide, ER anchor for the capsid protein C, removed in mature form by serine protease NS3. Residues 105–125 (VLTVQFLILGMLLMTGGVTLV) traverse the membrane as a helical segment. Topologically, residues 126–244 (RKSRWLLLNV…GERQLQKIER (119 aa)) are extracellular. N-linked (GlcNAc...) asparagine; by host glycosylation is found at asparagine 134 and asparagine 150. The helical transmembrane segment at 245–265 (WLVRNPFFAVTALAIAYLVGS) threads the bilayer. The Cytoplasmic segment spans residues 266–270 (NMTQR). A helical membrane pass occupies residues 271–285 (VVIALLVLAVGPAYS). The Extracellular segment spans residues 286 to 730 (AHCIGITDRD…MVFGSAFQGL (445 aa)). Intrachain disulfides connect cysteine 288/cysteine 315, cysteine 345/cysteine 406, cysteine 359/cysteine 390, cysteine 377/cysteine 401, cysteine 467/cysteine 568, and cysteine 585/cysteine 615. Positions 383-396 (DRGWGNGCGLFGKG) are fusion peptide. A helical transmembrane segment spans residues 731–751 (FGGLSWITKVIMGAVLIWVGI). At 752–757 (NMRNMT) the chain is on the extracellular side. The helical transmembrane segment at 758–778 (MSMSMILVGVIMMFLSLGVGA) threads the bilayer. Topologically, residues 779-1163 (DQGCAINFGK…RQGPKQILVG (385 aa)) are extracellular. 6 cysteine pairs are disulfide-bonded: cysteine 782/cysteine 793, cysteine 833/cysteine 921, cysteine 957/cysteine 1002, cysteine 1058/cysteine 1107, cysteine 1069/cysteine 1091, and cysteine 1090/cysteine 1094. Residues asparagine 908 and asparagine 986 are each glycosylated (N-linked (GlcNAc...) asparagine; by host).

In terms of assembly, homodimer. Interacts (via N-terminus) with host EXOC1 (via C-terminus); this interaction results in EXOC1 degradation through the proteasome degradation pathway. As to quaternary structure, forms heterodimers with envelope protein E in the endoplasmic reticulum and Golgi. Homodimer; in the endoplasmic reticulum and Golgi. In terms of assembly, homodimer; Homohexamer when secreted. Interacts with envelope protein E. Post-translationally, specific enzymatic cleavages in vivo yield mature proteins. The nascent capsid protein C contains a C-terminal hydrophobic domain that act as a signal sequence for translocation of prM into the lumen of the ER. Mature capsid protein C is cleaved at a site upstream of this hydrophobic domain by NS3. prM is cleaved in post-Golgi vesicles by a host furin, releasing the mature small envelope protein M, and peptide pr. Non-structural protein 2A-alpha, a C-terminally truncated form of non-structural protein 2A, results from partial cleavage by NS3. Specific enzymatic cleavages in vivo yield mature proteins peptide 2K acts as a signal sequence and is removed from the N-terminus of NS4B by the host signal peptidase in the ER lumen. Signal cleavage at the 2K-4B site requires a prior NS3 protease-mediated cleavage at the 4A-2K site. In terms of processing, cleaved in post-Golgi vesicles by a host furin, releasing the mature small envelope protein M, and peptide pr. This cleavage is incomplete as up to 30% of viral particles still carry uncleaved prM. N-glycosylated. Post-translationally, N-glycosylated. The excreted form is glycosylated and this is required for efficient secretion of the protein from infected cells.

It is found in the virion. Its subcellular location is the host nucleus. The protein localises to the host cytoplasm. It localises to the host perinuclear region. The protein resides in the secreted. It is found in the virion membrane. Its subcellular location is the host endoplasmic reticulum membrane. In terms of biological role, plays a role in virus budding by binding to the cell membrane and gathering the viral RNA into a nucleocapsid that forms the core of a mature virus particle. During virus entry, may induce genome penetration into the host cytoplasm after hemifusion induced by the surface proteins. Can migrate to the cell nucleus where it modulates host functions. Its function is as follows. Inhibits RNA silencing by interfering with host Dicer. Prevents premature fusion activity of envelope proteins in trans-Golgi by binding to envelope protein E at pH6.0. After virion release in extracellular space, gets dissociated from E dimers. Functionally, acts as a chaperone for envelope protein E during intracellular virion assembly by masking and inactivating envelope protein E fusion peptide. prM is the only viral peptide matured by host furin in the trans-Golgi network probably to avoid catastrophic activation of the viral fusion activity in acidic Golgi compartment prior to virion release. prM-E cleavage is inefficient, and many virions are only partially matured. These uncleaved prM would play a role in immune evasion. In terms of biological role, may play a role in virus budding. Exerts cytotoxic effects by activating a mitochondrial apoptotic pathway through M ectodomain. May display a viroporin activity. Its function is as follows. Binds to host cell surface receptor and mediates fusion between viral and cellular membranes. Envelope protein is synthesized in the endoplasmic reticulum in the form of heterodimer with protein prM. They play a role in virion budding in the ER, and the newly formed immature particle is covered with 60 spikes composed of heterodimer between precursor prM and envelope protein E. The virion is transported to the Golgi apparatus where the low pH causes dissociation of PrM-E heterodimers and formation of E homodimers. prM-E cleavage is inefficient, and many virions are only partially matured. These uncleaved prM would play a role in immune evasion. Involved in immune evasion, pathogenesis and viral replication. Once cleaved off the polyprotein, is targeted to three destinations: the viral replication cycle, the plasma membrane and the extracellular compartment. Essential for viral replication. Required for formation of the replication complex and recruitment of other non-structural proteins to the ER-derived membrane structures. Excreted as a hexameric lipoparticle that plays a role against host immune response. Antagonizing the complement function. Binds to the host macrophages and dendritic cells. Inhibits signal transduction originating from Toll-like receptor 3 (TLR3). Functionally, component of the viral RNA replication complex that functions in virion assembly and antagonizes the host immune response. This chain is Genome polyprotein, found in Aedes aegypti (Yellowfever mosquito).